The primary structure comprises 115 residues: Probable 4-amino-4-deoxy-L-arabinose-phosphoundecaprenol flippase subunit ArnE (115 aa).

A run of 3 helical transmembrane segments spans residues 42–62 (PWPW…LLLL), 65–85 (VEVG…TLVA), and 93–112 (VDRR…ALLG). Positions 46–113 (LALLALGLGL…IVAGVALLGR (68 aa)) constitute an EamA domain.

Belongs to the ArnE family. Heterodimer of ArnE and ArnF.

The protein localises to the cell inner membrane. It functions in the pathway bacterial outer membrane biogenesis; lipopolysaccharide biosynthesis. Its function is as follows. Translocates 4-amino-4-deoxy-L-arabinose-phosphoundecaprenol (alpha-L-Ara4N-phosphoundecaprenol) from the cytoplasmic to the periplasmic side of the inner membrane. This Pseudomonas paraeruginosa (strain DSM 24068 / PA7) (Pseudomonas aeruginosa (strain PA7)) protein is Probable 4-amino-4-deoxy-L-arabinose-phosphoundecaprenol flippase subunit ArnE.